Reading from the N-terminus, the 318-residue chain is ATP phosphoribosyltransferase regulatory subunit (318 aa).

The protein belongs to the class-II aminoacyl-tRNA synthetase family. HisZ subfamily. As to quaternary structure, heteromultimer composed of HisG and HisZ subunits.

The protein resides in the cytoplasm. Its pathway is amino-acid biosynthesis; L-histidine biosynthesis; L-histidine from 5-phospho-alpha-D-ribose 1-diphosphate: step 1/9. Its function is as follows. Required for the first step of histidine biosynthesis. May allow the feedback regulation of ATP phosphoribosyltransferase activity by histidine. The chain is ATP phosphoribosyltransferase regulatory subunit from Lactococcus lactis subsp. cremoris (strain MG1363).